We begin with the raw amino-acid sequence, 202 residues long: MMQDVSSSPVSPADDSLSNSEEEPDRQQPPSGKRGGRKRRSSRRSAGGGAGPGGAAGGGVGGGDEPGSPAQGKRGKKSAGCGGGGGAGGGGGSSSGGGSPQSYEELQTQRVMANVRERQRTQSLNEAFAALRKIIPTLPSDKLSKIQTLKLAARYIDFLYQVLQSDELDSKMASCSYVAHERLSYAFSVWRMEGAWSMSASH.

Low complexity predominate over residues 1-18; it reads MMQDVSSSPVSPADDSLS. Residues 1 to 105 are disordered; it reads MMQDVSSSPV…GGGSPQSYEE (105 aa). Basic residues predominate over residues 34–43; it reads RGGRKRRSSR. 2 stretches are compositionally biased toward gly residues: residues 46-65 and 80-99; these read AGGG…GGDE and GCGG…GGGS. A bHLH domain is found at 108 to 159; sequence TQRVMANVRERQRTQSLNEAFAALRKIIPTLPSDKLSKIQTLKLAARYIDFL. The segment at 161–191 is sufficient for transactivation activity; the sequence is QVLQSDELDSKMASCSYVAHERLSYAFSVWR.

As to quaternary structure, efficient DNA binding requires dimerization with another bHLH protein. Homodimer or heterodimer with E proteins such as TCF3. ID1 binds preferentially to TCF3 but does not interact efficiently with TWIST1 so ID1 levels control the amount of TCF3 available to dimerize with TWIST1 and thus determine the type of dimer formed. In terms of tissue distribution, subset of mesodermal cells.

The protein resides in the nucleus. Functionally, acts as a transcriptional regulator. Inhibits myogenesis by sequestrating E proteins, inhibiting trans-activation by MEF2, and inhibiting DNA-binding by MYOD1 through physical interaction. This interaction probably involves the basic domains of both proteins. Also represses expression of pro-inflammatory cytokines such as TNFA and IL1B. Regulates cranial suture patterning and fusion. Activates transcription as a heterodimer with E proteins. Regulates gene expression differentially, depending on dimer composition. Homodimers induce expression of FGFR2 and POSTN while heterodimers repress FGFR2 and POSTN expression and induce THBS1 expression. Heterodimerization is also required for osteoblast differentiation. Represses the activity of the circadian transcriptional activator: NPAS2-BMAL1 heterodimer. The chain is Twist-related protein 1 (TWIST1) from Homo sapiens (Human).